The primary structure comprises 368 residues: High affinity iron permease 1 (368 aa).

7 consecutive transmembrane segments (helical) span residues 8 to 28, 50 to 70, 86 to 106, 142 to 162, 173 to 193, 204 to 224, and 287 to 307; these read VPIF…ISVL, VWIG…AFIA, IWEG…GLAM, AFFV…VVFI, SIPI…FLIY, FFVF…AKGV, and SIIS…FSYF. The interval 346-368 is disordered; sequence DKESDEEANNHPKEKIESDAIKA. A compositionally biased stretch (basic and acidic residues) spans 353 to 368; that stretch reads ANNHPKEKIESDAIKA.

Belongs to the oxidase-dependent Fe transporter (OFeT) (TC 9.A.10.1) family.

Its subcellular location is the cell membrane. High affinity iron permease required for iron uptake in iron-depleted environments. Required for full virulence in mice. This Rhizopus delemar (strain RA 99-880 / ATCC MYA-4621 / FGSC 9543 / NRRL 43880) (Mucormycosis agent) protein is High affinity iron permease 1.